A 465-amino-acid polypeptide reads, in one-letter code: GTPase Der (465 aa).

2 consecutive EngA-type G domains span residues 3 to 166 and 184 to 358; these read FLVA…LNEF and IHFS…ACAN. GTP is bound by residues 9 to 16, 56 to 60, 118 to 121, 190 to 197, 237 to 241, and 302 to 305; these read GRANVGKS, DTGGI, NKVD, GRPNVGKS, DTAGV, and NKWD. The 85-residue stretch at 359-443 folds into the KH-like domain; that stretch reads KKITTADATR…PIVFEFKQSE (85 aa).

Belongs to the TRAFAC class TrmE-Era-EngA-EngB-Septin-like GTPase superfamily. EngA (Der) GTPase family. As to quaternary structure, associates with the 50S ribosomal subunit.

GTPase that plays an essential role in the late steps of ribosome biogenesis. The polypeptide is GTPase Der (Francisella philomiragia subsp. philomiragia (strain ATCC 25017 / CCUG 19701 / FSC 153 / O#319-036)).